The primary structure comprises 298 residues: Putative S-adenosyl-L-methionine-dependent methyltransferase MSMEG_1480/MSMEI_1444 (298 aa).

Residues Asp127 and 156 to 157 (DL) each bind S-adenosyl-L-methionine.

This sequence belongs to the UPF0677 family.

Its function is as follows. Exhibits S-adenosyl-L-methionine-dependent methyltransferase activity. The polypeptide is Putative S-adenosyl-L-methionine-dependent methyltransferase MSMEG_1480/MSMEI_1444 (Mycolicibacterium smegmatis (strain ATCC 700084 / mc(2)155) (Mycobacterium smegmatis)).